The following is a 29-amino-acid chain: Cytochrome b6-f complex subunit 8 (29 aa).

A helical transmembrane segment spans residues 3–23; it reads ILSISWAFLMVVFTFSLSLVV.

The protein belongs to the PetN family. In terms of assembly, the 4 large subunits of the cytochrome b6-f complex are cytochrome b6, subunit IV (17 kDa polypeptide, PetD), cytochrome f and the Rieske protein, while the 4 small subunits are PetG, PetL, PetM and PetN. The complex functions as a dimer.

The protein localises to the plastid. The protein resides in the chloroplast thylakoid membrane. In terms of biological role, component of the cytochrome b6-f complex, which mediates electron transfer between photosystem II (PSII) and photosystem I (PSI), cyclic electron flow around PSI, and state transitions. This is Cytochrome b6-f complex subunit 8 from Chara vulgaris (Common stonewort).